The primary structure comprises 365 residues: Cytosolic 5'-nucleotidase 1A (365 aa).

Positions 1 to 11 (MEPGQPREARE) are enriched in basic and acidic residues. Positions 1-23 (MEPGQPREAREPGPGAETAAVPR) are disordered. Catalysis depends on D208, which acts as the Nucleophile.

This sequence belongs to the 5'-nucleotidase type 3 family. Mg(2+) serves as cofactor.

Its subcellular location is the cytoplasm. It carries out the reaction a ribonucleoside 5'-phosphate + H2O = a ribonucleoside + phosphate. The enzyme catalyses a 2'-deoxyribonucleoside 5'-phosphate + H2O = a 2'-deoxyribonucleoside + phosphate. The catalysed reaction is IMP + H2O = inosine + phosphate. It catalyses the reaction AMP + H2O = adenosine + phosphate. It carries out the reaction dCMP + H2O = 2'-deoxycytidine + phosphate. Activated by ADP. Catalyzes the hydrolysis of ribonucleotide and deoxyribonucleotide monophosphates, releasing inorganic phosphate and the corresponding nucleoside. AMP is the major substrate but can also hydrolyze dCMP and IMP. The polypeptide is Cytosolic 5'-nucleotidase 1A (Nt5c1a) (Mus musculus (Mouse)).